The following is a 333-amino-acid chain: Sphingomyelinase C (333 aa).

The N-terminal stretch at 1–26 (MKGKLLKGVLSLGVGLGALYSGTSAQ) is a signal peptide. The cysteines at positions 150 and 186 are disulfide-linked.

Belongs to the neutral sphingomyelinase family. The cofactor is Mg(2+). The N-terminus is blocked.

It is found in the secreted. It carries out the reaction a sphingomyelin + H2O = phosphocholine + an N-acylsphing-4-enine + H(+). Its activity is regulated as follows. Activated by cobalt and manganese ions. Its function is as follows. Required, with sphingomyelinase, to effect target cell lysis (hemolysis). The chain is Sphingomyelinase C (cerB) from Bacillus cereus.